The following is a 181-amino-acid chain: Large ribosomal subunit protein uL5c (181 aa).

It belongs to the universal ribosomal protein uL5 family. As to quaternary structure, part of the 50S ribosomal subunit; contacts the 5S rRNA.

Its subcellular location is the plastid. The protein resides in the chloroplast. In terms of biological role, binds 5S rRNA, forms part of the central protuberance of the 50S subunit. The sequence is that of Large ribosomal subunit protein uL5c (rpl5) from Guillardia theta (Cryptophyte).